A 451-amino-acid chain; its full sequence is Acetylornithine aminotransferase, mitochondrial (451 aa).

Lys-302 carries the post-translational modification N6-(pyridoxal phosphate)lysine.

This sequence belongs to the class-III pyridoxal-phosphate-dependent aminotransferase family. Pyridoxal 5'-phosphate is required as a cofactor. Found at highest levels in nodules, confined to the infected cells.

It is found in the mitochondrion. It catalyses the reaction N(2)-acetyl-L-ornithine + 2-oxoglutarate = N-acetyl-L-glutamate 5-semialdehyde + L-glutamate. It participates in amino-acid biosynthesis; L-arginine biosynthesis; N(2)-acetyl-L-ornithine from L-glutamate: step 4/4. In terms of biological role, involved in the biosynthesis of citrulline. The polypeptide is Acetylornithine aminotransferase, mitochondrial (AG118) (Alnus glutinosa (European alder)).